Reading from the N-terminus, the 272-residue chain is Protein MGF 110-11L (272 aa).

A helical transmembrane segment spans residues 1–17 (MKVLLGLLLGYSVLILA). Asparagine 68 is a glycosylation site (N-linked (GlcNAc...) asparagine; by host). 2 helical membrane passes run 129 to 149 (QFCLYFIIGIAYTGCFVCALC) and 156 to 176 (TTMKLFILLSILVWLAQPVLN). An N-linked (GlcNAc...) asparagine; by host glycan is attached at asparagine 264.

Belongs to the asfivirus MGF 110 family.

Its subcellular location is the host membrane. Plays a role in virus cell tropism, and may be required for efficient virus replication in macrophages. The polypeptide is Protein MGF 110-11L (Ornithodoros (relapsing fever ticks)).